The chain runs to 130 residues: Anti-adapter protein IraD (130 aa).

The protein belongs to the GpW/Gp25 family. IraD subfamily. As to quaternary structure, interacts with RssB.

It localises to the cytoplasm. Its function is as follows. Inhibits RpoS proteolysis by regulating RssB activity, thereby increasing the stability of the sigma stress factor RpoS during oxidative stress. Its effect on RpoS stability is due to its interaction with RssB, which probably blocks the interaction of RssB with RpoS, and the consequent delivery of the RssB-RpoS complex to the ClpXP protein degradation pathway. This is Anti-adapter protein IraD from Escherichia coli O139:H28 (strain E24377A / ETEC).